Consider the following 469-residue polypeptide: MNPNQKIITIGSVSLTIATICFLMQIAILVTTVTLHFKQYECDSPANNQVMPCEPIIIERNITEIVYLTNTTIEKEICPKLVEYRNWSKPQCKITGFAPFSKDNSIRLSAGGDIWVTREPYVSCDPGKCYQFALGQGTTLDNKHSNDTIHDRTPHRTLLMNELGVPFHLGTRQVCIAWSSSSCHDGKAWLHVCVTGYDKNATASFIYDGRLVDSIGSWSKNILRTQESECVCINGTCTVVMTDGSASERADTKILFIEEGKIVHISPLSGSAQHVEECSCYPRYPGVRCVCRDNWKGSNRPVVDINVKDYSIASSYVCSGLVGDTPRKNDRYSSSYCRNPNNEKGNHGVKGWAFDDGNDVWMGRTISDESRSGYETFKVIGGWSTPNSKLQINRQVIVDSDNRSGYSGIFSVEGKSCINRCFYVELIRGREQETRVWWTSNSIVVFCGTSGTYGTGSWPDGADINLMPI.

The Intravirion segment spans residues 1-9 (MNPNQKIIT). A helical membrane pass occupies residues 10–30 (IGSVSLTIATICFLMQIAILV). The segment at 11–33 (GSVSLTIATICFLMQIAILVTTV) is involved in apical transport and lipid raft association. Residues 31–469 (TTVTLHFKQY…DGADINLMPI (439 aa)) lie on the Virion surface side of the membrane. Residues 36–88 (HFKQYECDSPANNQVMPCEPIIIERNITEIVYLTNTTIEKEICPKLVEYRNWS) are hypervariable stalk region. Residues asparagine 61, asparagine 70, and asparagine 86 are each glycosylated (N-linked (GlcNAc...) asparagine; by host). The segment at 91-469 (QCKITGFAPF…DGADINLMPI (379 aa)) is head of neuraminidase. 8 cysteine pairs are disulfide-bonded: cysteine 92/cysteine 417, cysteine 124/cysteine 129, cysteine 183/cysteine 230, cysteine 232/cysteine 237, cysteine 278/cysteine 291, cysteine 280/cysteine 289, cysteine 318/cysteine 337, and cysteine 421/cysteine 447. Arginine 118 contacts substrate. Asparagine 146 carries N-linked (GlcNAc...) asparagine; by host glycosylation. The active-site Proton donor/acceptor is the aspartate 151. Arginine 152 contacts substrate. N-linked (GlcNAc...) asparagine; by host glycosylation is found at asparagine 200 and asparagine 234. 276–277 (EE) provides a ligand contact to substrate. Position 292 (arginine 292) interacts with substrate. Aspartate 293, glycine 297, and aspartate 324 together coordinate Ca(2+). A substrate-binding site is contributed by arginine 371. A glycan (N-linked (GlcNAc...) asparagine; by host) is linked at asparagine 402. Catalysis depends on tyrosine 406, which acts as the Nucleophile.

Belongs to the glycosyl hydrolase 34 family. In terms of assembly, homotetramer. Ca(2+) is required as a cofactor. Post-translationally, N-glycosylated.

It localises to the virion membrane. It is found in the host apical cell membrane. The catalysed reaction is Hydrolysis of alpha-(2-&gt;3)-, alpha-(2-&gt;6)-, alpha-(2-&gt;8)- glycosidic linkages of terminal sialic acid residues in oligosaccharides, glycoproteins, glycolipids, colominic acid and synthetic substrates.. Inhibited by the neuraminidase inhibitors zanamivir (Relenza) and oseltamivir (Tamiflu). These drugs interfere with the release of progeny virus from infected cells and are effective against all influenza strains. Resistance to neuraminidase inhibitors is quite rare. In terms of biological role, catalyzes the removal of terminal sialic acid residues from viral and cellular glycoconjugates. Cleaves off the terminal sialic acids on the glycosylated HA during virus budding to facilitate virus release. Additionally helps virus spread through the circulation by further removing sialic acids from the cell surface. These cleavages prevent self-aggregation and ensure the efficient spread of the progeny virus from cell to cell. Otherwise, infection would be limited to one round of replication. Described as a receptor-destroying enzyme because it cleaves a terminal sialic acid from the cellular receptors. May facilitate viral invasion of the upper airways by cleaving the sialic acid moieties on the mucin of the airway epithelial cells. Likely to plays a role in the budding process through its association with lipid rafts during intracellular transport. May additionally display a raft-association independent effect on budding. Plays a role in the determination of host range restriction on replication and virulence. Sialidase activity in late endosome/lysosome traffic seems to enhance virus replication. The chain is Neuraminidase from Influenza A virus (strain A/Memphis/2/1978 H3N2).